We begin with the raw amino-acid sequence, 160 residues long: MNNFSHWNEAGRPKMVDISEKEITTRTAIARSTITLSNEVYQAIQQGGIKKGDPTQVAQIAGIMGAKKTADIIPMCHPIMLQGTDLQFDYEKIDNGYALHIQATVKCNGKTGVEMEALTAVSIAALTFYDMCKAVDKTMVIKETYLVEKTGGKSGTFTHK.

Substrate contacts are provided by residues 75–77 (MCH) and 115–116 (ME). D130 is an active-site residue.

This sequence belongs to the MoaC family. As to quaternary structure, homohexamer; trimer of dimers.

It carries out the reaction (8S)-3',8-cyclo-7,8-dihydroguanosine 5'-triphosphate = cyclic pyranopterin phosphate + diphosphate. Its pathway is cofactor biosynthesis; molybdopterin biosynthesis. In terms of biological role, catalyzes the conversion of (8S)-3',8-cyclo-7,8-dihydroguanosine 5'-triphosphate to cyclic pyranopterin monophosphate (cPMP). This Lysinibacillus sphaericus (strain C3-41) protein is Cyclic pyranopterin monophosphate synthase.